Reading from the N-terminus, the 790-residue chain is Tumor necrosis factor alpha-induced protein 3 (790 aa).

Ala-2 is modified (N-acetylalanine). A TRAF-binding region spans residues Pro-58–Glu-300. The OTU domain maps to Leu-92–Leu-263. Residue Asp-100 is part of the active site. Cys-103 functions as the Nucleophile in the catalytic mechanism. Interaction with ubiquitin stretches follow at residues Leu-157–Tyr-159, Ser-190–Glu-192, and Phe-224–Leu-227. His-256 acts as the Proton acceptor in catalysis. Positions Ala-369–Cys-775 are interaction with TNIP1. The A20-type 1 zinc finger occupies Ser-381 to Asn-416. Positions Lys-386–Pro-453 are interaction with RIPK1. Residues Cys-387, Cys-392, Cys-404, and Cys-407 each coordinate Zn(2+). Residues Gln-415–Pro-467 form a disordered region. Ser-459 is subject to Phosphoserine. A20-type zinc fingers lie at residues Glu-472–Ser-507 and His-515–Ser-548. Cys-478, Cys-483, Cys-495, Cys-498, Cys-521, Cys-524, Cys-536, and Cys-539 together coordinate Zn(2+). The interval Ser-550–His-580 is disordered. Over residues Asp-566–Pro-576 the composition is skewed to polar residues. Phosphoserine is present on Ser-575. Residues Arg-601 to His-636 form an A20-type 4 zinc finger. Residues Ser-605–Ile-655 are required for proteasomal degradation of UBE2N and UBE2D3, TRAF6 deubiquitination, and TAX1BP1 interaction with UBE2N. Positions Lys-606–Gly-790 are sufficient for inhibitory activity of TNF-induced NF-kappa-B activity. Zn(2+) contacts are provided by Cys-607, Cys-612, Cys-624, and Cys-627. Residue Ser-645 is modified to Phosphoserine. Residues Phe-651 to Phe-686 form an A20-type 5 zinc finger. Zn(2+)-binding residues include Cys-657, Cys-662, Cys-674, and Cys-677. The segment covering Ala-689–Pro-705 has biased composition (basic and acidic residues). Residues Ala-689–Ser-712 are disordered. Residues Arg-697–Gly-790 form a required for lysosomal localization and for TRAF2 lysosomal degradation region. 2 consecutive A20-type zinc fingers follow at residues Ser-710–Pro-745 and Asp-756–Gly-790. Positions 716, 721, 733, 736, 762, 767, 779, and 782 each coordinate Zn(2+).

It belongs to the peptidase C64 family. As to quaternary structure, homodimer. Interacts with TNIP1, TAX1BP1 and TRAF2. Interacts with RNF11, ITCH and TAX1BP1 only after TNF stimulation; these interaction are transient and they are lost after 1 hour of stimulation with TNF. Interacts with YWHAZ and YWHAH. Interacts with IKBKG; the interaction is induced by TNF stimulation and by polyubiquitin. Interacts with RIPK1. Interacts with UBE2N; the interaction requires TAX1BP1. Interacts with TRAF6. Proteolytically cleaved by MALT1 upon TCR stimulation; disrupts NF-kappa-B inhibitory function and results in increased IL-2 production. It is proposed that only a fraction of TNFAIP3 colocalized with TCR and CBM complex is cleaved, leaving the main TNFAIP3 pool intact.

It localises to the cytoplasm. The protein localises to the nucleus. It is found in the lysosome. The enzyme catalyses Thiol-dependent hydrolysis of ester, thioester, amide, peptide and isopeptide bonds formed by the C-terminal Gly of ubiquitin (a 76-residue protein attached to proteins as an intracellular targeting signal).. Functionally, ubiquitin-editing enzyme that contains both ubiquitin ligase and deubiquitinase activities. Involved in immune and inflammatory responses signaled by cytokines, such as TNF-alpha and IL-1 beta, or pathogens via Toll-like receptors (TLRs) through terminating NF-kappa-B activity. Essential component of a ubiquitin-editing protein complex, comprising also RNF11, ITCH and TAX1BP1, that ensures the transient nature of inflammatory signaling pathways. In cooperation with TAX1BP1 promotes disassembly of E2-E3 ubiquitin protein ligase complexes in IL-1R and TNFR-1 pathways; affected are at least E3 ligases TRAF6, TRAF2 and BIRC2, and E2 ubiquitin-conjugating enzymes UBE2N and UBE2D3. In cooperation with TAX1BP1 promotes ubiquitination of UBE2N and proteasomal degradation of UBE2N and UBE2D3. Upon TNF stimulation, deubiquitinates 'Lys-63'-polyubiquitin chains on RIPK1 and catalyzes the formation of 'Lys-48'-polyubiquitin chains. This leads to RIPK1 proteasomal degradation and consequently termination of the TNF- or LPS-mediated activation of NF-kappa-B. Deubiquitinates TRAF6 probably acting on 'Lys-63'-linked polyubiquitin. Upon T-cell receptor (TCR)-mediated T-cell activation, deubiquitinates 'Lys-63'-polyubiquitin chains on MALT1 thereby mediating disassociation of the CBM (CARD11:BCL10:MALT1) and IKK complexes and preventing sustained IKK activation. Deubiquitinates NEMO/IKBKG; the function is facilitated by TNIP1 and leads to inhibition of NF-kappa-B activation. Upon stimulation by bacterial peptidoglycans, probably deubiquitinates RIPK2. Can also inhibit I-kappa-B-kinase (IKK) through a non-catalytic mechanism which involves polyubiquitin; polyubiquitin promotes association with IKBKG and prevents IKK MAP3K7-mediated phosphorylation. Targets TRAF2 for lysosomal degradation. In vitro able to deubiquitinate 'Lys-11'-, 'Lys-48'- and 'Lys-63' polyubiquitin chains. Inhibitor of programmed cell death. Has a role in the function of the lymphoid system. Required for LPS-induced production of pro-inflammatory cytokines and IFN beta in LPS-tolerized macrophages. This is Tumor necrosis factor alpha-induced protein 3 (TNFAIP3) from Macaca fascicularis (Crab-eating macaque).